Here is a 316-residue protein sequence, read N- to C-terminus: Biotin synthase (316 aa).

Positions 38–266 (YKGKKIELCA…DKDIRVCGGR (229 aa)) constitute a Radical SAM core domain. Cys56, Cys60, and Cys63 together coordinate [4Fe-4S] cluster. Residues Ser100, Cys131, Cys191, and Arg261 each coordinate [2Fe-2S] cluster.

Belongs to the radical SAM superfamily. Biotin synthase family. As to quaternary structure, homodimer. The cofactor is [4Fe-4S] cluster. Requires [2Fe-2S] cluster as cofactor.

It catalyses the reaction (4R,5S)-dethiobiotin + (sulfur carrier)-SH + 2 reduced [2Fe-2S]-[ferredoxin] + 2 S-adenosyl-L-methionine = (sulfur carrier)-H + biotin + 2 5'-deoxyadenosine + 2 L-methionine + 2 oxidized [2Fe-2S]-[ferredoxin]. It participates in cofactor biosynthesis; biotin biosynthesis; biotin from 7,8-diaminononanoate: step 2/2. Functionally, catalyzes the conversion of dethiobiotin (DTB) to biotin by the insertion of a sulfur atom into dethiobiotin via a radical-based mechanism. The sequence is that of Biotin synthase from Thermodesulfovibrio yellowstonii (strain ATCC 51303 / DSM 11347 / YP87).